We begin with the raw amino-acid sequence, 507 residues long: Phosphoprotein (507 aa).

The disordered stretch occupies residues 56–79; that stretch reads DHQDISKPCFPAAGPGKSSMSRCH. Ser86 and Ser151 each carry phosphoserine. The span at 137–160 shows a compositional bias: acidic residues; sequence DGVEVWGGDEESENSDVDSGEPDP. The tract at residues 137-307 is disordered; it reads DGVEVWGGDE…QSNIEPEDDY (171 aa). Basic and acidic residues-rich tracts occupy residues 189–199 and 222–233; these read EIQKLLEDQSR and TASEKPIKKGTD. Composition is skewed to low complexity over residues 236 to 252 and 266 to 278; these read STSSGTMAESSSTGGAT and NASAENALASASN. Residues 279–301 show a composition bias toward polar residues; sequence VSPTQGSKTESGTTTSRISQSNI. The tract at residues 304–376 is multimerization; sequence EDDYDDELFS…LSSFMIAIPG (73 aa). Residues 459–507 are interaction with the nucleocapsid (N-RNA); the sequence is ASRSVIRSIIKSSHLGEDRKDYLMSLLNDIQGSKDLAQFHQMLVKILKN.

The protein belongs to the morbillivirus P protein family. In terms of assembly, homotetramer. Interacts (via multimerization domain) with polymerase L; this interaction forms the polymerase L-P complex. Interacts (via N-terminus) with N0 (via Ncore); this interaction allows P to chaperon N0 to avoid N polymerization before encapsidation. Interacts (via C-terminus) with N-RNA template; this interaction positions the polymerase on the template for both transcription and replication. In terms of processing, phosphorylation on serines by host CK2 is necessary for the formation of viral factories.

Essential cofactor of the RNA polymerase L that plays a central role in the transcription and replication by forming the polymerase complex with RNA polymerase L and recruiting L to the genomic N-RNA template for RNA synthesis. Also plays a central role in the encapsidation of nascent RNA chains by forming the encapsidation complex with the nucleocapsid protein N (N-P complex). Acts as a chaperone for newly synthesized free N protein, so-called N0, allowing encapsidation of nascent RNA chains during replication. The nucleoprotein protein N prevents excessive phosphorylation of P, which leads to down-regulation of viral transcription/ replication. Participates, together with N, in the formation of viral factories (viroplasms), which are large inclusions in the host cytoplasm where replication takes place. In Bos indicus (Zebu), this protein is Phosphoprotein (P/V).